The primary structure comprises 455 residues: L-serine dehydratase (455 aa).

The protein belongs to the iron-sulfur dependent L-serine dehydratase family. [4Fe-4S] cluster serves as cofactor.

The catalysed reaction is L-serine = pyruvate + NH4(+). It participates in carbohydrate biosynthesis; gluconeogenesis. This chain is L-serine dehydratase (sdaA), found in Haemophilus influenzae (strain ATCC 51907 / DSM 11121 / KW20 / Rd).